The sequence spans 155 residues: RNA pyrophosphohydrolase (155 aa).

The Nudix hydrolase domain occupies 5 to 147; it reads RYRPNVAAIV…KRPVYKKVLE (143 aa). The short motif at 42-63 is the Nudix box element; sequence GGIDKGESPKEALLRELKEEIG.

This sequence belongs to the Nudix hydrolase family. RppH subfamily. It depends on a divalent metal cation as a cofactor.

Its function is as follows. Accelerates the degradation of transcripts by removing pyrophosphate from the 5'-end of triphosphorylated RNA, leading to a more labile monophosphorylated state that can stimulate subsequent ribonuclease cleavage. This Nitratiruptor sp. (strain SB155-2) protein is RNA pyrophosphohydrolase.